We begin with the raw amino-acid sequence, 107 residues long: Ig kappa chain V-VI region NQ6-8.3.1 (107 aa).

Residues 1–23 are framework-1; sequence QIVLTQSPAIMSASPGQKVTMTC. Cysteines 23 and 87 form a disulfide. Positions 24-33 are complementarity-determining-1; that stretch reads SASSSVSYMH. The tract at residues 34-48 is framework-2; sequence WYQQKSGTSPKRWIY. Residues 49–55 form a complementarity-determining-2 region; the sequence is DTSKLAS. Positions 56–87 are framework-3; it reads GXPARFSGSGSATSYSLTITSMQAEDAATYYC. Positions 88–96 are complementarity-determining-3; it reads QQWSSNPLT. The interval 97–106 is framework-4; the sequence is FGAGTKLELK.

Anti-2-phenyl oxazolone (PHOX) Antibody. The polypeptide is Ig kappa chain V-VI region NQ6-8.3.1 (Mus musculus (Mouse)).